Consider the following 163-residue polypeptide: Peptidyl-prolyl cis-trans isomerase FKBP15-2 (163 aa).

A signal peptide spans 1-25; that stretch reads MASKMSLRYSLFLIFFSLISLQGFA. In terms of domain architecture, PPIase FKBP-type spans 52-140; sequence GDTIKVHYRG…IFDTELIAVN (89 aa). The interval 142 to 163 is disordered; the sequence is KPAGGEEYGGDEDDEGYGNDEL. Residues 149–163 are compositionally biased toward acidic residues; the sequence is YGGDEDDEGYGNDEL. The short motif at 160 to 163 is the Prevents secretion from ER element; sequence NDEL.

This sequence belongs to the FKBP-type PPIase family.

It is found in the endoplasmic reticulum lumen. The catalysed reaction is [protein]-peptidylproline (omega=180) = [protein]-peptidylproline (omega=0). In terms of biological role, PPIases accelerate the folding of proteins. It catalyzes the cis-trans isomerization of proline imidic peptide bonds in oligopeptides. This is Peptidyl-prolyl cis-trans isomerase FKBP15-2 (FKBP15-2) from Arabidopsis thaliana (Mouse-ear cress).